Reading from the N-terminus, the 408-residue chain is LL-diaminopimelate aminotransferase (408 aa).

The substrate site is built by Tyr15 and Gly42. Pyridoxal 5'-phosphate-binding positions include Tyr72, 108–109 (SK), Tyr132, Asn187, Tyr218, and 246–248 (SFS). Residues Lys109, Tyr132, and Asn187 each contribute to the substrate site. N6-(pyridoxal phosphate)lysine is present on Lys249. The pyridoxal 5'-phosphate site is built by Arg257 and Asn292. Substrate-binding residues include Asn292 and Arg388.

It belongs to the class-I pyridoxal-phosphate-dependent aminotransferase family. LL-diaminopimelate aminotransferase subfamily. As to quaternary structure, homodimer. It depends on pyridoxal 5'-phosphate as a cofactor.

The enzyme catalyses (2S,6S)-2,6-diaminopimelate + 2-oxoglutarate = (S)-2,3,4,5-tetrahydrodipicolinate + L-glutamate + H2O + H(+). It participates in amino-acid biosynthesis; L-lysine biosynthesis via DAP pathway; LL-2,6-diaminopimelate from (S)-tetrahydrodipicolinate (aminotransferase route): step 1/1. Involved in the synthesis of meso-diaminopimelate (m-DAP or DL-DAP), required for both lysine and peptidoglycan biosynthesis. Catalyzes the direct conversion of tetrahydrodipicolinate to LL-diaminopimelate. This Synechococcus sp. (strain CC9311) protein is LL-diaminopimelate aminotransferase.